A 910-amino-acid polypeptide reads, in one-letter code: Dynein axonemal assembly factor 1 homolog (910 aa).

LRR repeat units lie at residues 43–64 (GLKC…DHQS), 65–86 (QLRC…QHCK), 87–108 (QLDT…GSDI), 111–132 (VLNT…AELR), and 136–157 (FVSV…KVLA). An LRRCT domain is found at 171 to 209 (PVVNDIPSYRKTLILECKSLTYLDSRPVFDKDRACAEAW). Over residues 217-230 (ERKEHQRWKKEEQR) the composition is skewed to basic and acidic residues. 6 disordered regions span residues 217–275 (ERKE…GDFE), 297–332 (TKGD…DPTL), 344–399 (SRAC…GSIL), 620–642 (EQVP…PVDQ), 662–682 (QVEV…IPEE), and 855–910 (EELE…QGDH). Polar residues predominate over residues 314–331 (STNSVDYITGSDSNSDPT). The segment covering 380-389 (SLSDSSSSSS) has biased composition (low complexity). Over residues 620–633 (EQVPDEVEANDKAS) the composition is skewed to basic and acidic residues. Positions 855–865 (EELEELNEEED) are enriched in acidic residues. Positions 866–878 (PALKEAGDFKHDE) are enriched in basic and acidic residues.

Belongs to the DNAAF1 family.

Its subcellular location is the cell projection. It localises to the cilium. Cilium-specific protein required for cilia structures. This is Dynein axonemal assembly factor 1 homolog from Anopheles gambiae (African malaria mosquito).